The primary structure comprises 411 residues: Dual-specificity RNA methyltransferase RlmN (411 aa).

The active-site Proton acceptor is Glu-125. A Radical SAM core domain is found at 131–380; the sequence is EEGRGTLCIS…IRTPRGRDIL (250 aa). Cys-138 and Cys-383 are disulfide-bonded. Residues Cys-145, Cys-149, and Cys-152 each coordinate [4Fe-4S] cluster. S-adenosyl-L-methionine is bound by residues 209-210, Ser-241, 263-265, and Asn-340; these read GE and SLH. Cys-383 functions as the S-methylcysteine intermediate in the catalytic mechanism.

It belongs to the radical SAM superfamily. RlmN family. Requires [4Fe-4S] cluster as cofactor.

The protein localises to the cytoplasm. It catalyses the reaction adenosine(2503) in 23S rRNA + 2 reduced [2Fe-2S]-[ferredoxin] + 2 S-adenosyl-L-methionine = 2-methyladenosine(2503) in 23S rRNA + 5'-deoxyadenosine + L-methionine + 2 oxidized [2Fe-2S]-[ferredoxin] + S-adenosyl-L-homocysteine. The enzyme catalyses adenosine(37) in tRNA + 2 reduced [2Fe-2S]-[ferredoxin] + 2 S-adenosyl-L-methionine = 2-methyladenosine(37) in tRNA + 5'-deoxyadenosine + L-methionine + 2 oxidized [2Fe-2S]-[ferredoxin] + S-adenosyl-L-homocysteine. Its function is as follows. Specifically methylates position 2 of adenine 2503 in 23S rRNA and position 2 of adenine 37 in tRNAs. m2A2503 modification seems to play a crucial role in the proofreading step occurring at the peptidyl transferase center and thus would serve to optimize ribosomal fidelity. The protein is Dual-specificity RNA methyltransferase RlmN of Brucella abortus (strain S19).